The following is a 128-amino-acid chain: Large ribosomal subunit protein bL17 (128 aa).

Belongs to the bacterial ribosomal protein bL17 family. In terms of assembly, part of the 50S ribosomal subunit. Contacts protein L32.

This Enterobacter sp. (strain 638) protein is Large ribosomal subunit protein bL17.